The chain runs to 348 residues: Phenylalanine--tRNA ligase alpha subunit (348 aa).

Mg(2+) is bound at residue Glu-262.

This sequence belongs to the class-II aminoacyl-tRNA synthetase family. Phe-tRNA synthetase alpha subunit type 1 subfamily. Tetramer of two alpha and two beta subunits. Requires Mg(2+) as cofactor.

It is found in the cytoplasm. The catalysed reaction is tRNA(Phe) + L-phenylalanine + ATP = L-phenylalanyl-tRNA(Phe) + AMP + diphosphate + H(+). The chain is Phenylalanine--tRNA ligase alpha subunit from Streptococcus pneumoniae serotype 2 (strain D39 / NCTC 7466).